The following is a 548-amino-acid chain: uncharacterized protein (548 aa).

Phosphoserine occurs at positions 19 and 25. Threonine 47 bears the Phosphothreonine mark.

This is an uncharacterized protein from Schizosaccharomyces pombe (strain 972 / ATCC 24843) (Fission yeast).